Consider the following 566-residue polypeptide: MDIKRIILYVIVALLAIALFNAWQRDYPPTPKPTPTVEQPTANGDHPTAYTPPAFTPGAAEKTKKAGTIALTSKVPEARLITVRTDVLDVEIDTQGGNIVSAKLPKYPVSLEEKQTPVQILSGEPNELYVAQSGLTNGNGQPTTVQFESAKKQYVLENGQNQLIVQLTGRAPDGLLVTKTYTFHRDDYAIHLAYQVKNNTSKPWQGSLYTQITRRQPPTEHHHFYVRSYNGASMGSPQTPYEKLSYESLDKQNIDRTSQSGWIAMQQHYFLSAWVPGNPELTYHYYSHVIPASGEPNVYVVGFVSPQMNVAAGSEAATHATLYVGPEIAKRLKGLAPGLERTIDYGWLWPISMLLFWILSAVHAVVKNWGWSIIITTILIKIVFYWFSAKSFRSMARMREMQPRIQALKERHGDDRQALSRATMELYRKEKINPLGGCLPMLIQVPVFIAFYYVIIESVQLRQAPFIFWIHDLSVKDPYYILPIIMGLSMLAQQWLSPTSPDPTQQKMMWILPVIFTVFFINFPAGLVLYWITNNVVQTLQQWYVNKTYESHKAKLKARRARKRKR.

5 consecutive transmembrane segments (helical) span residues 3-23 (IKRI…FNAW), 346-366 (GWLW…HAVV), 369-389 (WGWS…WFSA), 436-456 (GGCL…YVII), and 509-529 (MWIL…GLVL).

Belongs to the OXA1/ALB3/YidC family. Type 1 subfamily. As to quaternary structure, interacts with the Sec translocase complex via SecD. Specifically interacts with transmembrane segments of nascent integral membrane proteins during membrane integration.

The protein resides in the cell inner membrane. In terms of biological role, required for the insertion and/or proper folding and/or complex formation of integral membrane proteins into the membrane. Involved in integration of membrane proteins that insert both dependently and independently of the Sec translocase complex, as well as at least some lipoproteins. Aids folding of multispanning membrane proteins. The polypeptide is Membrane protein insertase YidC (Coxiella burnetii (strain CbuK_Q154) (Coxiella burnetii (strain Q154))).